An 868-amino-acid polypeptide reads, in one-letter code: Protein translocase subunit SecA (868 aa).

Residues Gln-88, 106–110, and Asp-509 contribute to the ATP site; that span reads GEGKT. Positions 816 to 827 are enriched in polar residues; that stretch reads NAENEPLNYNNQ. A disordered region spans residues 816 to 868; it reads NAENEPLNYNNQGEDENFTPEKKIPRNAPCPCGSGKKYKDCHGKSGPKKGIFA. Positions 845, 847, 856, and 857 each coordinate Zn(2+).

Belongs to the SecA family. As to quaternary structure, monomer and homodimer. Part of the essential Sec protein translocation apparatus which comprises SecA, SecYEG and auxiliary proteins SecDF-YajC and YidC. It depends on Zn(2+) as a cofactor.

The protein localises to the cell inner membrane. The protein resides in the cytoplasm. The catalysed reaction is ATP + H2O + cellular proteinSide 1 = ADP + phosphate + cellular proteinSide 2.. Functionally, part of the Sec protein translocase complex. Interacts with the SecYEG preprotein conducting channel. Has a central role in coupling the hydrolysis of ATP to the transfer of proteins into and across the cell membrane, serving as an ATP-driven molecular motor driving the stepwise translocation of polypeptide chains across the membrane. The protein is Protein translocase subunit SecA of Campylobacter concisus (strain 13826).